Consider the following 297-residue polypeptide: HTH-type transcriptional regulator ArgP (297 aa).

Residues 4–60 (PDYRTLQALDAVIRERGFERAAQKLCITQSAVSQRIKQLENMFGQPLLVRTVPPRPT) form the HTH lysR-type domain. Positions 21–40 (FERAAQKLCITQSAVSQRIK) form a DNA-binding region, H-T-H motif.

It belongs to the LysR transcriptional regulatory family. In terms of assembly, homodimer.

Its function is as follows. Controls the transcription of genes involved in arginine and lysine metabolism. The protein is HTH-type transcriptional regulator ArgP of Klebsiella pneumoniae (strain 342).